Here is an 86-residue protein sequence, read N- to C-terminus: Small nuclear ribonucleoprotein F (86 aa).

The Sm domain occupies 14–86; that stretch reads NPKPFLKGLV…NVLYIRELPN (73 aa).

It belongs to the snRNP Sm proteins family. SmF/LSm6 subfamily. As to quaternary structure, component of the Sm core complex, present in spliceosomal snRNP U1, U2, U4/U6 and U5. The core complex contains SMB1, SMD1, SMD2, SMD3, SME1, SMX3 and SMX2 (Sm proteins B, D1, D2, D3, E, F and G, respectively), and is probably a heptameric ring structure. SMX3 specifically interacts with SME1. Belongs to the CWC complex (or CEF1-associated complex), a spliceosome sub-complex reminiscent of a late-stage spliceosome composed of the U2, U5 and U6 snRNAs and at least BUD13, BUD31, BRR2, CDC40, CEF1, CLF1, CUS1, CWC2, CWC15, CWC21, CWC22, CWC23, CWC24, CWC25, CWC27, ECM2, HSH155, IST3, ISY1, LEA1, MSL1, NTC20, PRP8, PRP9, PRP11, PRP19, PRP21, PRP22, PRP45, PRP46, SLU7, SMB1, SMD1, SMD2, SMD3, SMX2, SMX3, SNT309, SNU114, SPP2, SYF1, SYF2, RSE1 and YJU2. Component of the U4/U6-U5 tri-snRNP complex composed of the U4, U6 and U5 snRNAs and at least PRP3, PRP4, PRP6, PRP8, PRP18, PRP31, PRP38, SNU13, SNU23, SNU66, SNU114, SPP381, SMB1, SMD1, SMD2, SMD3, SMX2, SMX3, LSM2, LSM3, LSM4, LSM5, LSM6, LSM7, LSM8, BRR2 and DIB1.

The protein localises to the nucleus. Its subcellular location is the cytoplasm. Its function is as follows. Plays a role in pre-mRNA splicing as a core component of the spliceosomal U1, U2, U4 and U5 small nuclear ribonucleoproteins (snRNPs), the building blocks of the spliceosome. The chain is Small nuclear ribonucleoprotein F (SMX3) from Saccharomyces cerevisiae (strain ATCC 204508 / S288c) (Baker's yeast).